We begin with the raw amino-acid sequence, 436 residues long: Probable glucose-6-phosphate isomerase (436 aa).

Glu-272 (proton donor) is an active-site residue. Active-site residues include His-293 and Lys-404.

The protein belongs to the GPI family.

It localises to the cytoplasm. The enzyme catalyses alpha-D-glucose 6-phosphate = beta-D-fructose 6-phosphate. Its pathway is carbohydrate biosynthesis; gluconeogenesis. The protein operates within carbohydrate degradation; glycolysis; D-glyceraldehyde 3-phosphate and glycerone phosphate from D-glucose: step 2/4. Its function is as follows. Catalyzes the reversible isomerization of glucose-6-phosphate to fructose-6-phosphate. This chain is Probable glucose-6-phosphate isomerase, found in Haloarcula marismortui (strain ATCC 43049 / DSM 3752 / JCM 8966 / VKM B-1809) (Halobacterium marismortui).